The following is a 28-amino-acid chain: Glutathione S-transferase 5 (28 aa).

The GST N-terminal domain maps to 1-28 (PNYKLTYFNLRGRAEISRYLFAYAGIKY). Tyrosine 7 serves as a coordination point for glutathione.

It belongs to the GST superfamily. Sigma family. In terms of assembly, homodimer.

Its subcellular location is the cytoplasm. It catalyses the reaction RX + glutathione = an S-substituted glutathione + a halide anion + H(+). Conjugation of reduced glutathione to a wide number of exogenous and endogenous hydrophobic electrophiles. In Gallus gallus (Chicken), this protein is Glutathione S-transferase 5.